We begin with the raw amino-acid sequence, 88 residues long: MSIMDHSPTTGVVTVIVILIAIAALGALILGCWCYLRLQRISQSEDEESIVGDGETKEPFLLVQYSAKGPCVERKAKLMTPNGPEVHG.

The Mitochondrial intermembrane segment spans residues 1-10 (MSIMDHSPTT). A helical membrane pass occupies residues 11–31 (GVVTVIVILIAIAALGALILG). Residues 32–88 (CWCYLRLQRISQSEDEESIVGDGETKEPFLLVQYSAKGPCVERKAKLMTPNGPEVHG) lie on the Cytoplasmic side of the membrane. Serine 49 is subject to Phosphoserine.

It belongs to the stannin family. Monomer.

It is found in the mitochondrion outer membrane. Plays a role in the toxic effects of organotins. Plays a role in endosomal maturation. This chain is Stannin (SNN), found in Homo sapiens (Human).